Consider the following 284-residue polypeptide: Tetraspanin-10 (284 aa).

The Cytoplasmic segment spans residues 1–11; the sequence is MGMGTSTFVIR. Residues 12 to 32 traverse the membrane as a helical segment; the sequence is WVNLLTMLLAVAVIIFGVWMS. Over 33–43 the chain is Extracellular; sequence THNDGCRRSLT. Residues 44–64 form a helical membrane-spanning segment; the sequence is FPVIALGGFIFLISIIGFLGA. Topologically, residues 65-75 are cytoplasmic; sequence CKRSVALLWIY. Residues 76–96 form a helical membrane-spanning segment; that stretch reads LAVLLIVLIAILVFTVLAFIV. Residues 97 to 228 lie on the Extracellular side of the membrane; that stretch reads TNNGSGHTNP…AGVAQYMKTE (132 aa). N-linked (GlcNAc...) asparagine glycosylation is found at asparagine 99, asparagine 128, and asparagine 183. The chain crosses the membrane as a helical span at residues 229-249; sequence WRLVAIFNVVLFVVLISSLLS. Residues 250-284 are Cytoplasmic-facing; it reads TRFDSEQSFGLLNGLVQISNITFKDCQTTTVPKQF.

This sequence belongs to the tetraspanin (TM4SF) family.

The protein resides in the membrane. In terms of biological role, may be involved in the regulation of cell differentiation. The polypeptide is Tetraspanin-10 (TET10) (Arabidopsis thaliana (Mouse-ear cress)).